The primary structure comprises 42 residues: MKVKGSLKSHRNRDKNCKVVKRGGRIYIINEIKPRCKTRQGS.

Belongs to the bacterial ribosomal protein bL36 family.

This is Large ribosomal subunit protein bL36 from Wolbachia sp. subsp. Brugia malayi (strain TRS).